Reading from the N-terminus, the 207-residue chain is Large ribosomal subunit protein uL3 (207 aa).

A disordered region spans residues 126–149 (GPASHGSKKWHRRPGSIGQRKTPG).

Belongs to the universal ribosomal protein uL3 family. In terms of assembly, part of the 50S ribosomal subunit. Forms a cluster with proteins L14 and L19.

Its function is as follows. One of the primary rRNA binding proteins, it binds directly near the 3'-end of the 23S rRNA, where it nucleates assembly of the 50S subunit. This Deinococcus geothermalis (strain DSM 11300 / CIP 105573 / AG-3a) protein is Large ribosomal subunit protein uL3.